A 393-amino-acid polypeptide reads, in one-letter code: Protein TsgA (393 aa).

12 helical membrane passes run W11 to M31, F51 to P71, F78 to L98, A101 to I121, L134 to F154, W162 to G182, I206 to I226, A245 to L265, I273 to Q293, W298 to G318, F332 to V352, and L361 to V381.

The protein belongs to the major facilitator superfamily. TsgA family.

The protein resides in the cell inner membrane. The chain is Protein TsgA from Salmonella arizonae (strain ATCC BAA-731 / CDC346-86 / RSK2980).